Here is an 81-residue protein sequence, read N- to C-terminus: ATP synthase subunit c (81 aa).

2 helical membrane-spanning segments follow: residues 14 to 34 (YLGAGLAAIGCIGGGVGIGTV) and 60 to 80 (LAFAEVTSLYALFVAIMLLFV).

The protein belongs to the ATPase C chain family. As to quaternary structure, F-type ATPases have 2 components, F(1) - the catalytic core - and F(0) - the membrane proton channel. F(1) has five subunits: alpha(3), beta(3), gamma(1), delta(1), epsilon(1). F(0) has three main subunits: a(1), b(2) and c(10-14). The alpha and beta chains form an alternating ring which encloses part of the gamma chain. F(1) is attached to F(0) by a central stalk formed by the gamma and epsilon chains, while a peripheral stalk is formed by the delta and b chains.

Its subcellular location is the cell membrane. Its function is as follows. F(1)F(0) ATP synthase produces ATP from ADP in the presence of a proton or sodium gradient. F-type ATPases consist of two structural domains, F(1) containing the extramembraneous catalytic core and F(0) containing the membrane proton channel, linked together by a central stalk and a peripheral stalk. During catalysis, ATP synthesis in the catalytic domain of F(1) is coupled via a rotary mechanism of the central stalk subunits to proton translocation. Functionally, key component of the F(0) channel; it plays a direct role in translocation across the membrane. A homomeric c-ring of between 10-14 subunits forms the central stalk rotor element with the F(1) delta and epsilon subunits. In Clostridium acetobutylicum (strain ATCC 824 / DSM 792 / JCM 1419 / IAM 19013 / LMG 5710 / NBRC 13948 / NRRL B-527 / VKM B-1787 / 2291 / W), this protein is ATP synthase subunit c.